The chain runs to 299 residues: Protein sprouty homolog 4 (299 aa).

An N-acetylmethionine modification is found at Met1. 2 disordered regions span residues 55–79 (NPSL…PTPA) and 92–126 (FSGR…QASP). Residues 92 to 107 (FSGRPSSVSSSSSTSS) show a composition bias toward low complexity. At Ser125 the chain carries Phosphoserine. In terms of domain architecture, SPR spans 166–273 (KCKECASPRT…GYDRLRRPGC (108 aa)). The required for interaction with TESK1. Required for colocalization with TESK1 at vesicular spots in the cytoplasm and inhibition of TESK1 kinase activity, resulting in inhibition of cell spreading stretch occupies residues 181–299 (VCNQECLCSA…AKTSRPDKPF (119 aa)).

The protein belongs to the sprouty family. In terms of assembly, interacts (via C-terminus) with TESK1 (via both C- and N-termini); the interaction inhibits TESK1 kinase activity. Interacts with RAF1. Interacts with CAV1 (via C-terminus).

Its subcellular location is the cytoplasm. The protein resides in the cell projection. It is found in the ruffle membrane. In terms of biological role, suppresses the insulin receptor and EGFR-transduced MAPK signaling pathway, but does not inhibit MAPK activation by a constitutively active mutant Ras. Probably impairs the formation of GTP-Ras. Inhibits Ras-independent, but not Ras-dependent, activation of RAF1. Represses integrin-mediated cell spreading via inhibition of TESK1-mediated phosphorylation of cofilin. The sequence is that of Protein sprouty homolog 4 (SPRY4) from Homo sapiens (Human).